An 869-amino-acid chain; its full sequence is MMEQYYELKAQAQDCLLFYRMGDFFELFFDDAKKASAILDIALTSRGTHIEESIPMCGVPIHAAESYLARLIKAGCRVAIADQVETPAEAKKRGGSKALVKRAIIRVVTAGTLTEEALLDSRAANWLVAVARAGSDFGLAAADISTGRFETIALSEGRLDSELARLSAAEVIAPESLVQQEAYKNRIPQAVELSNECFNSPHGEARLKSIFKISTLDGFGIFSRAELAAIDGLLAWLDRAGQGKLPFLQQPVRRAYADHMLIDAATRSSLELTASTEGRRDGSLVSSIDHTVTGAGARLLTADLGAPLMDIDVIHKRLDLVEFFFYDTLLREDVRDLLKGSPDLARVLGRLVAGRGTPRDLSLLRDGLNQAFILYEKLFSLEHKPALLEQILPDFRGHGSLVDLLERALIEQPPIDATQGGFIAKGYDHALDELRSMGGESRRAIAALEATYREKTGINTLKIRHNNVLGYHIEVPSRHADALMQANSGFTHRQTLAGVVRFNASELHEQAIRATQAGVQAIAIESKHLACLIESTLEKRDNIAACADALARLDVSAGFADCAVQKNWTRPTVDDSCCFDVIQGRHPVVENALVKSGERFVANNTNLDPKNRLWLVTGPNMGGKSTFLRQNALLAVLAQTGSFVPAEKARIGLVDRLFSRVGASDNLARGRSTFMVEMVETAAILSQATNRSFVILDEVGRGTSTYDGLAIAWAVVEAVHDINACRCLFATHYHELTQLTSRLPALSLHHVRAKEWQGDLVLLHEMAEGAADRSYGIEVARLAGLPPVVLKRASEVLAQLENSSGKNNDSSANLSDLPLFGVQAFQTVLPQNNPLYDAVSELDADALTPRQALDIIYRLKELAAKDKVM.

618–625 contacts ATP; the sequence is GPNMGGKS.

This sequence belongs to the DNA mismatch repair MutS family.

Its function is as follows. This protein is involved in the repair of mismatches in DNA. It is possible that it carries out the mismatch recognition step. This protein has a weak ATPase activity. This chain is DNA mismatch repair protein MutS, found in Zymomonas mobilis subsp. mobilis (strain ATCC 31821 / ZM4 / CP4).